A 205-amino-acid chain; its full sequence is NADH-quinone oxidoreductase subunit J (205 aa).

5 helical membrane-spanning segments follow: residues 1–21 (MPIFFYLFTTLIIISSLCVVL), 26–46 (VYSVLWLIFTFINAAGLMILL), 54–74 (LLIVIYVGAVAVLFLFVIMML), 89–109 (LSLSIFITLIMFVDLVITVIL), and 142–162 (FMLPFQMAGLILFVAMISCIT).

It belongs to the complex I subunit 6 family.

Its subcellular location is the cell membrane. The enzyme catalyses a quinone + NADH + 5 H(+)(in) = a quinol + NAD(+) + 4 H(+)(out). Functionally, NDH-1 shuttles electrons from NADH, via FMN and iron-sulfur (Fe-S) centers, to quinones in the respiratory chain. Couples the redox reaction to proton translocation (for every two electrons transferred, four hydrogen ions are translocated across the cytoplasmic membrane), and thus conserves the redox energy in a proton gradient. The protein is NADH-quinone oxidoreductase subunit J (nuoJ) of Rickettsia typhi (strain ATCC VR-144 / Wilmington).